The primary structure comprises 406 residues: O-glycosyltransferase PaGT (406 aa).

A disordered region spans residues 1-26; that stretch reads MSPPSQIKPPQGTTPVPPSELDPRSD.

The protein belongs to the afumC glycosyltransferase family.

It functions in the pathway mycotoxin biosynthesis. In terms of biological role, O-glycosyltransferase; part of the 2 gene clusters that mediate the biosynthesis of fusicoccins, diterpene glucosides that display phytohormone-like activity and function as potent activators of plasma membrane H(+)-ATPases in plants by modifying 14-3-3 proteins and cause the plant disease constriction canker. The first step in the pathway is performed by the fusicoccadiene synthase PaFS that possesses both prenyl transferase and terpene cyclase activity, converting isopentenyl diphosphate and dimethylallyl diphosphate into geranylgeranyl diphosphate (GGDP) and successively converting GGDP into fusicocca-2,10(14)-diene, a precursor for fusicoccin H. The second step is the oxidation at the C-8 position by the cytochrome P450 monooxygenase PaP450-2 to yield fusicocca-2,10(14)-diene-8-beta-ol. The cytochrome P450 monooxygenase PaP450-1 then catalyzes the hydroxylation at the C-16 position to produce fusicocca-2,10(14)-diene-8-beta,16-diol. The dioxygenase fc-dox then catalyzes the 16-oxydation of fusicocca-2,10(14)-diene-8-beta,16-diol to yield an aldehyde (8-beta-hydroxyfusicocca-1,10(14)-dien-16-al). The short-chain dehydrogenase/reductase fc-sdr catalyzes the reduction of the aldehyde to yield fusicocca-1,10(14)-diene-8-beta,16-diol. The next step is the hydroxylation at C-9 performed by the cytochrome P450 monooxygenase PaP450-3 that leads to fusicoccin H aglycon which is glycosylated to fusicoccin H by the O-glycosyltransferase PaGT. Hydroxylation at C-12 by the cytochrome P450 monooxygenase PaP450-4 leads then to the production of fusicoccin Q and is followed by methylation by the O-methyltransferase PaMT to yield fusicoccin P. Fusicoccin P is further converted to fusicoccin J via prenylation by the O-glucose prenyltransferase PaPT. Cytochrome P450 monooxygenase PaP450-5 then performs hydroxylation at C-19 to yield dideacetyl-fusicoccin A which is acetylated to 3'-O-deacetyl-fusicoccin A by the O-acetyltransferase PaAT-2. Finally, a another acetylation by the O-acetyltransferase PaAT-1 yields fusicoccin A. The chain is O-glycosyltransferase PaGT from Phomopsis amygdali (Fusicoccum amygdali).